We begin with the raw amino-acid sequence, 86 residues long: Protein U17 (86 aa).

This is Protein U17 (U17/U16) from Homo sapiens (Human).